The primary structure comprises 243 residues: Polycomb group RING finger protein 1 (243 aa).

A Glycyl lysine isopeptide (Lys-Gly) (interchain with G-Cter in SUMO2) cross-link involves residue lysine 12. An RING-type zinc finger spans residues 35 to 74 (CCLCAGYFVDATTITECLHTFCKSCIVKYLQTSKYCPMCN). Residues 74-231 (NIKIHETQPL…LSRWFGKPSP (158 aa)) are necessary for repressor activity. Lysine 76 is covalently cross-linked (Glycyl lysine isopeptide (Lys-Gly) (interchain with G-Cter in SUMO2)). The tract at residues 138 to 239 (LPFTSFDHYY…SPLLLQYSVK (102 aa)) is required for the interaction with the KDM2B-SKP1 heterodimeric complex. Residues 151 to 239 (EQLSLCLERL…SPLLLQYSVK (89 aa)) are RING-finger and WD40-associated ubiquitin-like domain (RAWUL); sufficient for interaction with BCOR and BCORL1.

As to quaternary structure, interacts with BCORL1, forming heterodimers. The PCGF1-BCORL1 heterodimeric complex interacts with the KDM2B-SKP1 heterodimeric complex to form a homotetrameric polycomb repression complex 1 (PRC1.1). Component of the repressive BCOR complex containing a Polycomb group subcomplex at least composed of RYBP, RING1 and RNF2/RING2. Specifically interacts with BCOR, RING1 and RNF2/RING2. Component of a PRC1-like complex. Interacts with CBX6, CBX7 and CBX8. Interacts with DPPA4, NANOG, POU5F1 and RYBP. In terms of tissue distribution, highly expressed in brain, cerebellum, heart and testis.

It is found in the nucleus. In terms of biological role, component of the Polycomb group (PcG) multiprotein BCOR complex, a complex required to maintain the transcriptionally repressive state of some genes, such as BCL6 and the cyclin-dependent kinase inhibitor, CDKN1A. Transcriptional repressor that may be targeted to the DNA by BCL6; this transcription repressor activity may be related to PKC signaling pathway. Represses CDKN1A expression by binding to its promoter, and this repression is dependent on the retinoic acid response element (RARE element). Promotes cell cycle progression and enhances cell proliferation as well. May have a positive role in tumor cell growth by down-regulating CDKN1A. Component of a Polycomb group (PcG) multiprotein PRC1-like complex, a complex class required to maintain the transcriptionally repressive state of many genes, including Hox genes, throughout development. PcG PRC1 complex acts via chromatin remodeling and modification of histones; it mediates monoubiquitination of histone H2A 'Lys-119', rendering chromatin heritably changed in its expressibility. Within the PRC1-like complex, regulates RNF2 ubiquitin ligase activity. Regulates the expression of DPPA4 and NANOG in the NT2 embryonic carcinoma cells. The chain is Polycomb group RING finger protein 1 (Pcgf1) from Rattus norvegicus (Rat).